A 135-amino-acid chain; its full sequence is Large ribosomal subunit protein uL16c (135 aa).

Belongs to the universal ribosomal protein uL16 family. As to quaternary structure, part of the 50S ribosomal subunit.

Its subcellular location is the plastid. It localises to the chloroplast. The polypeptide is Large ribosomal subunit protein uL16c (Platanus occidentalis (Sycamore)).